Reading from the N-terminus, the 241-residue chain is Small ribosomal subunit protein uS2 (241 aa).

The protein belongs to the universal ribosomal protein uS2 family.

The protein is Small ribosomal subunit protein uS2 of Enterobacter sp. (strain 638).